The primary structure comprises 538 residues: Putative cysteine ligase BshC (538 aa).

A coiled-coil region spans residues 462 to 533 (LDHLEKRLLK…DPLESNFKIL (72 aa)).

Belongs to the BshC family.

The sequence is that of Putative cysteine ligase BshC from Christiangramia forsetii (strain DSM 17595 / CGMCC 1.15422 / KT0803) (Gramella forsetii).